The chain runs to 302 residues: 33 kDa chaperonin (302 aa).

Disulfide bonds link Cys234/Cys236 and Cys267/Cys270.

The protein belongs to the HSP33 family. In terms of processing, under oxidizing conditions two disulfide bonds are formed involving the reactive cysteines. Under reducing conditions zinc is bound to the reactive cysteines and the protein is inactive.

It localises to the cytoplasm. Redox regulated molecular chaperone. Protects both thermally unfolding and oxidatively damaged proteins from irreversible aggregation. Plays an important role in the bacterial defense system toward oxidative stress. The chain is 33 kDa chaperonin from Neisseria meningitidis serogroup B (strain ATCC BAA-335 / MC58).